The sequence spans 45 residues: MIQRTLTGTNRKKTKRSGFRSRMLQTEEEKLLILDVMKKRYYLVK.

The segment at 1 to 21 (MIQRTLTGTNRKKTKRSGFRS) is disordered. The segment covering 10–19 (NRKKTKRSGF) has biased composition (basic residues).

It belongs to the bacterial ribosomal protein bL34 family.

Its subcellular location is the plastid. It localises to the chloroplast. This is Large ribosomal subunit protein bL34c (rpl34) from Cyanidium caldarium (Red alga).